The sequence spans 122 residues: Small ribosomal subunit protein uS13 (122 aa).

Residues 95–116 (GLPCRGQKTKTNARTRKGKKKT) show a composition bias toward basic residues. The tract at residues 95–122 (GLPCRGQKTKTNARTRKGKKKTVGAATK) is disordered.

Belongs to the universal ribosomal protein uS13 family. As to quaternary structure, part of the 30S ribosomal subunit. Forms a loose heterodimer with protein S19. Forms two bridges to the 50S subunit in the 70S ribosome.

Located at the top of the head of the 30S subunit, it contacts several helices of the 16S rRNA. In the 70S ribosome it contacts the 23S rRNA (bridge B1a) and protein L5 of the 50S subunit (bridge B1b), connecting the 2 subunits; these bridges are implicated in subunit movement. Contacts the tRNAs in the A and P-sites. The chain is Small ribosomal subunit protein uS13 from Aliarcobacter butzleri (strain RM4018) (Arcobacter butzleri).